The primary structure comprises 205 residues: Holliday junction resolvase RecU (205 aa).

Mg(2+)-binding residues include threonine 83, aspartate 85, glutamate 98, and glutamine 117.

The protein belongs to the RecU family. Requires Mg(2+) as cofactor.

The protein resides in the cytoplasm. The catalysed reaction is Endonucleolytic cleavage at a junction such as a reciprocal single-stranded crossover between two homologous DNA duplexes (Holliday junction).. In terms of biological role, endonuclease that resolves Holliday junction intermediates in genetic recombination. Cleaves mobile four-strand junctions by introducing symmetrical nicks in paired strands. Promotes annealing of linear ssDNA with homologous dsDNA. Required for DNA repair, homologous recombination and chromosome segregation. This Streptococcus suis (strain 98HAH33) protein is Holliday junction resolvase RecU.